The primary structure comprises 89 residues: UPF0213 protein HQ_3675A (89 aa).

Residues 3 to 78 form the GIY-YIG domain; that stretch reads DYHYVYIVEC…KSYTREKKQQ (76 aa).

It belongs to the UPF0213 family.

The polypeptide is UPF0213 protein HQ_3675A (Haloquadratum walsbyi (strain DSM 16790 / HBSQ001)).